The sequence spans 602 residues: UPF0329 protein ECU02_0060 (602 aa).

Residues 313–345 (EEDERKRAEAESARNREELLRMEEREKGKEKGS) are compositionally biased toward basic and acidic residues. The interval 313–407 (EEDERKRAEA…SPKEESKGEE (95 aa)) is disordered. Positions 346–356 (KGKGRKKRGKK) are enriched in basic residues. The segment covering 357-369 (GAGEAKEESKEED) has biased composition (basic and acidic residues). Acidic residues predominate over residues 370–384 (RGGEEEESVEADVPV).

The protein belongs to the UPF0329 family.

The sequence is that of UPF0329 protein ECU02_0060 from Encephalitozoon cuniculi (strain GB-M1) (Microsporidian parasite).